Reading from the N-terminus, the 213-residue chain is Imidazole glycerol phosphate synthase subunit HisH 1 (213 aa).

The Glutamine amidotransferase type-1 domain maps to 4–213 (TVAVIDYGMG…QNFVAWDGRW (210 aa)). The active-site Nucleophile is the Cys82. Residues His191 and Glu193 contribute to the active site.

In terms of assembly, heterodimer of HisH and HisF.

It localises to the cytoplasm. It catalyses the reaction 5-[(5-phospho-1-deoxy-D-ribulos-1-ylimino)methylamino]-1-(5-phospho-beta-D-ribosyl)imidazole-4-carboxamide + L-glutamine = D-erythro-1-(imidazol-4-yl)glycerol 3-phosphate + 5-amino-1-(5-phospho-beta-D-ribosyl)imidazole-4-carboxamide + L-glutamate + H(+). The catalysed reaction is L-glutamine + H2O = L-glutamate + NH4(+). It participates in amino-acid biosynthesis; L-histidine biosynthesis; L-histidine from 5-phospho-alpha-D-ribose 1-diphosphate: step 5/9. Its function is as follows. IGPS catalyzes the conversion of PRFAR and glutamine to IGP, AICAR and glutamate. The HisH subunit provides the glutamine amidotransferase activity that produces the ammonia necessary to HisF for the synthesis of IGP and AICAR. This chain is Imidazole glycerol phosphate synthase subunit HisH 1 (hisH1), found in Pseudomonas aeruginosa (strain ATCC 15692 / DSM 22644 / CIP 104116 / JCM 14847 / LMG 12228 / 1C / PRS 101 / PAO1).